Reading from the N-terminus, the 57-residue chain is UPF0509 protein YciZ (57 aa).

It belongs to the UPF0509 family.

The protein is UPF0509 protein YciZ of Escherichia coli O127:H6 (strain E2348/69 / EPEC).